Consider the following 340-residue polypeptide: Ketol-acid reductoisomerase (NADP(+)) (340 aa).

The KARI N-terminal Rossmann domain occupies 3–182 (VQMEYEKDVK…GAARVGLLET (180 aa)). NADP(+) is bound by residues 26-29 (YGSQ), arginine 49, serine 53, and 83-86 (DEIQ). Histidine 108 is an active-site residue. Position 134 (glycine 134) interacts with NADP(+). Residues 183–328 (TYKEETEEDL…AELRKAMPFV (146 aa)) form the KARI C-terminal knotted domain. The Mg(2+) site is built by aspartate 191, glutamate 195, glutamate 227, and glutamate 231. Serine 252 is a binding site for substrate.

It belongs to the ketol-acid reductoisomerase family. It depends on Mg(2+) as a cofactor.

It catalyses the reaction (2R)-2,3-dihydroxy-3-methylbutanoate + NADP(+) = (2S)-2-acetolactate + NADPH + H(+). It carries out the reaction (2R,3R)-2,3-dihydroxy-3-methylpentanoate + NADP(+) = (S)-2-ethyl-2-hydroxy-3-oxobutanoate + NADPH + H(+). Its pathway is amino-acid biosynthesis; L-isoleucine biosynthesis; L-isoleucine from 2-oxobutanoate: step 2/4. It functions in the pathway amino-acid biosynthesis; L-valine biosynthesis; L-valine from pyruvate: step 2/4. In terms of biological role, involved in the biosynthesis of branched-chain amino acids (BCAA). Catalyzes an alkyl-migration followed by a ketol-acid reduction of (S)-2-acetolactate (S2AL) to yield (R)-2,3-dihydroxy-isovalerate. In the isomerase reaction, S2AL is rearranged via a Mg-dependent methyl migration to produce 3-hydroxy-3-methyl-2-ketobutyrate (HMKB). In the reductase reaction, this 2-ketoacid undergoes a metal-dependent reduction by NADPH to yield (R)-2,3-dihydroxy-isovalerate. The sequence is that of Ketol-acid reductoisomerase (NADP(+)) from Streptococcus pneumoniae (strain CGSP14).